A 70-amino-acid polypeptide reads, in one-letter code: Large ribosomal subunit protein bL31 (70 aa).

Residues C16, C18, C37, and C40 each coordinate Zn(2+).

It belongs to the bacterial ribosomal protein bL31 family. Type A subfamily. As to quaternary structure, part of the 50S ribosomal subunit. Requires Zn(2+) as cofactor.

Binds the 23S rRNA. The sequence is that of Large ribosomal subunit protein bL31 from Histophilus somni (strain 2336) (Haemophilus somnus).